Here is a 406-residue protein sequence, read N- to C-terminus: Succinylornithine transaminase (406 aa).

At K252 the chain carries N6-(pyridoxal phosphate)lysine.

The protein belongs to the class-III pyridoxal-phosphate-dependent aminotransferase family. AstC subfamily. The cofactor is pyridoxal 5'-phosphate.

It carries out the reaction N(2)-succinyl-L-ornithine + 2-oxoglutarate = N-succinyl-L-glutamate 5-semialdehyde + L-glutamate. It functions in the pathway amino-acid degradation; L-arginine degradation via AST pathway; L-glutamate and succinate from L-arginine: step 3/5. Functionally, catalyzes the transamination of N(2)-succinylornithine and alpha-ketoglutarate into N(2)-succinylglutamate semialdehyde and glutamate. Can also act as an acetylornithine aminotransferase. The chain is Succinylornithine transaminase from Escherichia fergusonii (strain ATCC 35469 / DSM 13698 / CCUG 18766 / IAM 14443 / JCM 21226 / LMG 7866 / NBRC 102419 / NCTC 12128 / CDC 0568-73).